The sequence spans 660 residues: Putative ABC transporter ATP-binding MG390 (660 aa).

The region spanning 6 to 126 (QEQQNECGIC…KLWTGYAATV (121 aa)) is the Peptidase C39 domain. C12 is an active-site residue. 6 helical membrane-spanning segments follow: residues 150 to 170 (LVTF…LLAT), 188 to 208 (LVVL…LQVI), 265 to 285 (YIPN…LIGI), 290 to 310 (FLLI…YDFF), 379 to 399 (SFFQ…GIIE), and 402 to 422 (YQLS…TYAT). An ABC transporter domain is found at 464–657 (ISLENLSVTL…QNKINLTNYL (194 aa)). 494–501 (GQNGSGKS) lines the ATP pocket.

Belongs to the ABC transporter superfamily.

It is found in the cell membrane. The polypeptide is Putative ABC transporter ATP-binding MG390 (Mycoplasma genitalium (strain ATCC 33530 / DSM 19775 / NCTC 10195 / G37) (Mycoplasmoides genitalium)).